The following is a 384-amino-acid chain: Adaptive-response sensory kinase SasA (384 aa).

A Histidine kinase domain is found at 162–384 (MLAHDLRSPL…SFHFTLPVYR (223 aa)). His-165 is subject to Phosphohistidine; by autocatalysis.

Homooligomerizes. Interacts with KaiC. Participates in the KaiABC clock complex, whose core is composed of a KaiC homohexamer, 6 KaiB and up to 6 KaiA dimers. SasA and KaiB(fs) compete to bind to KaiC.

The enzyme catalyses ATP + protein L-histidine = ADP + protein N-phospho-L-histidine.. Functionally, member of the two-component regulatory system SasA/RpaA involved in genome-wide circadian gene expression. One of several clock output pathways. Participates in the Kai clock protein complex, the main circadian regulator in cyanobacteria, via its interaction with KaiC. KaiC enhances the autophosphorylation activity of SasA, which then transfers its phosphate group to RpaA to activate it. In addition to its output function, recruits fold-shifted KaiB (KaiB(fs)) to KaiC to cooperatively form the KaiB(6):KaiC(6) complex (independent of SasA kinase activity). Required for robustness of the circadian rhythm of gene expression and is involved in clock output, also required for adaptation to light/dark cycles. The polypeptide is Adaptive-response sensory kinase SasA (Microcystis aeruginosa (strain NIES-843 / IAM M-2473)).